Reading from the N-terminus, the 328-residue chain is Ferredoxin--NADP reductase (328 aa).

FAD-binding residues include E36, Q44, Y49, V89, F123, D284, and T324.

Belongs to the ferredoxin--NADP reductase type 2 family. As to quaternary structure, homodimer. Requires FAD as cofactor.

It catalyses the reaction 2 reduced [2Fe-2S]-[ferredoxin] + NADP(+) + H(+) = 2 oxidized [2Fe-2S]-[ferredoxin] + NADPH. The sequence is that of Ferredoxin--NADP reductase from Lacticaseibacillus paracasei (strain ATCC 334 / BCRC 17002 / CCUG 31169 / CIP 107868 / KCTC 3260 / NRRL B-441) (Lactobacillus paracasei).